We begin with the raw amino-acid sequence, 151 residues long: Small ribosomal subunit protein uS15 (151 aa).

Phosphoserine is present on serine 32. Glycyl lysine isopeptide (Lys-Gly) (interchain with G-Cter in ubiquitin) cross-links involve residues lysine 39 and lysine 43.

This sequence belongs to the universal ribosomal protein uS15 family. As to quaternary structure, component of the small ribosomal subunit (SSU). Mature yeast ribosomes consist of a small (40S) and a large (60S) subunit. The 40S small subunit contains 1 molecule of ribosomal RNA (18S rRNA) and 33 different proteins (encoded by 57 genes). The large 60S subunit contains 3 rRNA molecules (25S, 5.8S and 5S rRNA) and 46 different proteins (encoded by 81 genes).

It is found in the cytoplasm. Functionally, component of the ribosome, a large ribonucleoprotein complex responsible for the synthesis of proteins in the cell. The small ribosomal subunit (SSU) binds messenger RNAs (mRNAs) and translates the encoded message by selecting cognate aminoacyl-transfer RNA (tRNA) molecules. The large subunit (LSU) contains the ribosomal catalytic site termed the peptidyl transferase center (PTC), which catalyzes the formation of peptide bonds, thereby polymerizing the amino acids delivered by tRNAs into a polypeptide chain. The nascent polypeptides leave the ribosome through a tunnel in the LSU and interact with protein factors that function in enzymatic processing, targeting, and the membrane insertion of nascent chains at the exit of the ribosomal tunnel. The sequence is that of Small ribosomal subunit protein uS15 from Saccharomyces cerevisiae (strain ATCC 204508 / S288c) (Baker's yeast).